We begin with the raw amino-acid sequence, 313 residues long: Formimidoylglutamase (313 aa).

Mn(2+)-binding residues include His-130, Asp-155, His-157, Asp-159, Asp-241, and Asp-243.

This sequence belongs to the arginase family. Requires Mn(2+) as cofactor.

The enzyme catalyses N-formimidoyl-L-glutamate + H2O = formamide + L-glutamate. It functions in the pathway amino-acid degradation; L-histidine degradation into L-glutamate; L-glutamate from N-formimidoyl-L-glutamate (hydrolase route): step 1/1. Its function is as follows. Catalyzes the conversion of N-formimidoyl-L-glutamate to L-glutamate and formamide. The protein is Formimidoylglutamase of Salmonella choleraesuis (strain SC-B67).